Here is a 272-residue protein sequence, read N- to C-terminus: tRNA pseudouridine synthase B (272 aa).

Asp-38 serves as the catalytic Nucleophile.

Belongs to the pseudouridine synthase TruB family. Type 1 subfamily.

It carries out the reaction uridine(55) in tRNA = pseudouridine(55) in tRNA. In terms of biological role, responsible for synthesis of pseudouridine from uracil-55 in the psi GC loop of transfer RNAs. This Campylobacter jejuni subsp. jejuni serotype O:23/36 (strain 81-176) protein is tRNA pseudouridine synthase B.